Reading from the N-terminus, the 546-residue chain is Inosine-5'-monophosphate dehydrogenase (546 aa).

CBS domains follow at residues 135-197 and 198-254; these read FILD…VTAI and MSTD…PLAS. Residues 292–294 and 342–344 each bind NAD(+); these read DSS and GMG. Glycine 344 and glycine 346 together coordinate K(+). Serine 347 provides a ligand contact to IMP. A K(+)-binding site is contributed by cysteine 349. Cysteine 349 serves as the catalytic Thioimidate intermediate. IMP is bound by residues 382–384, 405–406, and 430–434; these read DGG, GG, and YRGMG. Arginine 460 functions as the Proton acceptor in the catalytic mechanism. Glutamine 472 is a binding site for IMP. K(+)-binding residues include glutamate 531 and glycine 532.

This sequence belongs to the IMPDH/GMPR family. Homotetramer. The cofactor is K(+).

The protein localises to the cytoplasm. It catalyses the reaction IMP + NAD(+) + H2O = XMP + NADH + H(+). Its pathway is purine metabolism; XMP biosynthesis via de novo pathway; XMP from IMP: step 1/1. With respect to regulation, mycophenolic acid (MPA) is a non-competitive inhibitor that prevents formation of the closed enzyme conformation by binding to the same site as the amobile flap. In contrast, mizoribine monophosphate (MZP) is a competitive inhibitor that induces the closed conformation. MPA is a potent inhibitor of mammalian IMPDHs but a poor inhibitor of the bacterial enzymes. MZP is a more potent inhibitor of bacterial IMPDH. In terms of biological role, catalyzes the conversion of inosine 5'-phosphate (IMP) to xanthosine 5'-phosphate (XMP), the first committed and rate-limiting step in the de novo synthesis of guanine nucleotides, and therefore plays an important role in the regulation of cell growth. This chain is Inosine-5'-monophosphate dehydrogenase, found in Aspergillus fumigatus (strain ATCC MYA-4609 / CBS 101355 / FGSC A1100 / Af293) (Neosartorya fumigata).